Here is a 1097-residue protein sequence, read N- to C-terminus: DNA-directed RNA polymerase subunit beta (1097 aa).

Residues 1072–1097 (QDVNPRRSTPSRPTYESLGVADYDED) are disordered.

It belongs to the RNA polymerase beta chain family. In cyanobacteria the RNAP catalytic core is composed of 2 alpha, 1 beta, 1 beta', 1 gamma and 1 omega subunit. When a sigma factor is associated with the core the holoenzyme is formed, which can initiate transcription.

It carries out the reaction RNA(n) + a ribonucleoside 5'-triphosphate = RNA(n+1) + diphosphate. Its function is as follows. DNA-dependent RNA polymerase catalyzes the transcription of DNA into RNA using the four ribonucleoside triphosphates as substrates. The chain is DNA-directed RNA polymerase subunit beta from Prochlorococcus marinus (strain MIT 9303).